Here is a 469-residue protein sequence, read N- to C-terminus: GDP-fucose protein O-fucosyltransferase 2 (469 aa).

The signal sequence occupies residues 1–18 (MKFIIVLLLFFFFKVIDR). GDP-beta-L-fucose contacts are provided by residues 56-60 (GEGFN), 277-279 (HLR), and 373-374 (RF). The active-site Proton acceptor is the Glu-57.

It belongs to the glycosyltransferase 68 family.

It is found in the endoplasmic reticulum. It carries out the reaction L-seryl-[protein] + GDP-beta-L-fucose = 3-O-(alpha-L-fucosyl)-L-seryl-[protein] + GDP + H(+). The enzyme catalyses L-threonyl-[protein] + GDP-beta-L-fucose = 3-O-(alpha-L-fucosyl)-L-threonyl-[protein] + GDP + H(+). The protein operates within protein modification; protein glycosylation. In terms of biological role, catalyzes the reaction that attaches fucose through an O-glycosidic linkage to a conserved serine or threonine residue in the consensus sequence C1-X-X-S/T-C2 of thrombospondin type I repeats (TSRs) where C1 and C2 are the first and second cysteines of the repeat, respectively. O-fucosylates sporozoite proteins CSP and TRAP. O-fucosylation regulates stability and intracellular trafficking of TRAP but not of CSP. Probably by regulating protein O-fucosylation, may play a role in parasite transmission to the mosquito vector and/or infection of the vertebrate host hepatocytes; however, POFUT2 involvement in transmission/infection is controversial. The polypeptide is GDP-fucose protein O-fucosyltransferase 2 (Plasmodium falciparum (isolate NF54)).